Consider the following 161-residue polypeptide: 2-C-methyl-D-erythritol 2,4-cyclodiphosphate synthase (161 aa).

Residues Asp10 and His12 each contribute to the a divalent metal cation site. 4-CDP-2-C-methyl-D-erythritol 2-phosphate is bound by residues 10-12 (DVH) and 36-37 (HS). His44 contributes to the a divalent metal cation binding site. 4-CDP-2-C-methyl-D-erythritol 2-phosphate-binding positions include 58–60 (DIG), 63–67 (FSDTD), and Arg144.

It belongs to the IspF family. In terms of assembly, homotrimer. Requires a divalent metal cation as cofactor.

It catalyses the reaction 4-CDP-2-C-methyl-D-erythritol 2-phosphate = 2-C-methyl-D-erythritol 2,4-cyclic diphosphate + CMP. It participates in isoprenoid biosynthesis; isopentenyl diphosphate biosynthesis via DXP pathway; isopentenyl diphosphate from 1-deoxy-D-xylulose 5-phosphate: step 4/6. Its function is as follows. Involved in the biosynthesis of isopentenyl diphosphate (IPP) and dimethylallyl diphosphate (DMAPP), two major building blocks of isoprenoid compounds. Catalyzes the conversion of 4-diphosphocytidyl-2-C-methyl-D-erythritol 2-phosphate (CDP-ME2P) to 2-C-methyl-D-erythritol 2,4-cyclodiphosphate (ME-CPP) with a corresponding release of cytidine 5-monophosphate (CMP). The protein is 2-C-methyl-D-erythritol 2,4-cyclodiphosphate synthase of Burkholderia lata (strain ATCC 17760 / DSM 23089 / LMG 22485 / NCIMB 9086 / R18194 / 383).